The chain runs to 138 residues: Large ribosomal subunit protein uL16c (138 aa).

It belongs to the universal ribosomal protein uL16 family. As to quaternary structure, part of the 50S ribosomal subunit.

It is found in the plastid. The protein localises to the chloroplast. The polypeptide is Large ribosomal subunit protein uL16c (Tetradesmus obliquus (Green alga)).